A 171-amino-acid polypeptide reads, in one-letter code: Co-chaperone protein HscB (171 aa).

Residues 2-74 enclose the J domain; that stretch reads DYFTLFGLPA…LARAEYLLSL (73 aa).

It belongs to the HscB family. Interacts with HscA and stimulates its ATPase activity. Interacts with IscU.

Its function is as follows. Co-chaperone involved in the maturation of iron-sulfur cluster-containing proteins. Seems to help targeting proteins to be folded toward HscA. This is Co-chaperone protein HscB from Enterobacter sp. (strain 638).